A 156-amino-acid chain; its full sequence is MPKESGRKVVATNRKARHEYHLGDTYEAGLALMGTEVKSLREGRANLTDGFATFYGDELWLEAVYIPEYLNGSWNNHSARRRRKLLLHRAELIKISHKTREAGFTLVPLQLYFLDGKAKVEIALAKGKRDYDKRQALREAQDTRESLRAMREKNLG.

Belongs to the SmpB family.

It is found in the cytoplasm. Its function is as follows. Required for rescue of stalled ribosomes mediated by trans-translation. Binds to transfer-messenger RNA (tmRNA), required for stable association of tmRNA with ribosomes. tmRNA and SmpB together mimic tRNA shape, replacing the anticodon stem-loop with SmpB. tmRNA is encoded by the ssrA gene; the 2 termini fold to resemble tRNA(Ala) and it encodes a 'tag peptide', a short internal open reading frame. During trans-translation Ala-aminoacylated tmRNA acts like a tRNA, entering the A-site of stalled ribosomes, displacing the stalled mRNA. The ribosome then switches to translate the ORF on the tmRNA; the nascent peptide is terminated with the 'tag peptide' encoded by the tmRNA and targeted for degradation. The ribosome is freed to recommence translation, which seems to be the essential function of trans-translation. This is SsrA-binding protein from Renibacterium salmoninarum (strain ATCC 33209 / DSM 20767 / JCM 11484 / NBRC 15589 / NCIMB 2235).